The sequence spans 159 residues: Protein NrdI (159 aa).

The protein belongs to the NrdI family.

In terms of biological role, probably involved in ribonucleotide reductase function. This is Protein NrdI from Rhodococcus erythropolis (strain PR4 / NBRC 100887).